Reading from the N-terminus, the 144-residue chain is Large ribosomal subunit protein uL16 (144 aa).

It belongs to the universal ribosomal protein uL16 family. Part of the 50S ribosomal subunit.

Binds 23S rRNA and is also seen to make contacts with the A and possibly P site tRNAs. This Bacillus anthracis (strain A0248) protein is Large ribosomal subunit protein uL16.